The following is a 1133-amino-acid chain: MSPTQWDFPVELCCRPMAFVTLTGLDVVYNAVHRAVWDAFCANRRADRVPISFKVLPGDHEYPKCRPKRTSYEWYIPKGILKTGWMNKHLNLVPALVVVFYELDWDEPQWKEKQSECATRVEIVRQSLQGRNTKVAVVLIQKKTPLPPGEDVIASERAAALCNACELSGKSLFVLPHTDHLVGYIIRLENAFYEHAQTYYYTEIRRVKSHKEFLNKTTHQLLFVRHQFKIAFFSELKQDTQNALKNYRTAYNLVHELRAHETNILEIKTMAGFINYKICRLCFQHNTPLDAIAQFRKHIDLCKKKIGSAELSFEHDAWMSKQFQAFGDLFDEAIKLGLTAIQTQNPGFYYQQAAYYAQERKQLAKTLCNHEASVMYPNPDPLETQTGVLDFYGQRSWRQGILSFDLSDPEKEKVGILAIQLKERNVVHSEIIITLLSNAVAQFKKYKCPRMKSHLMVQMGEEYYYAKDYTKALKLLDYVMCDYRSEGWWTLLTSVLTTALKCSYLMAQLKDYITYSLELLGRASTLKDDQKSRIEKNLINVLMNESPDPEPDCDILAVKTAQKLWADRISLAGSNIFTIGVQDFVPFVQCKAKFHAPSFHVDVPVQFDIYLKADCPHPIRFSKLCVSFNNQEYNQFCVIEEASKANEVLENLTQGKMCLVPGKTRKLLFKFVAKTEDVGKKIEITSVDLALGNETGRCVVLNWQGGGGDAASSQEALQAARSFKRRPKLPDNEVHWDSIIIQASTMIISRVPNISVHLLHEPPALTNEMYCLVVTVQSHEKTQIRDVKLTAGLKPGQDANLTQKTHVTLHGTELCDESYPALLTDIPVGDLHPGEQLEKMLYVRCGTVGSRMFLVYVSYLINTTVEEKEIVCKCHKDETVTIETVFPFDVAVKFVSTKFEHLERVYADIPFLLMTDLLSASPWALTIVSSELQLAPSMTTVDQLESQVDNVILQTGESASECFCLQCPSLGNIEGGVATGHYIISWKRTSAMENIPIITTVITLPHVIVENIPLHVNADLPSFGRVRESLPVKYHLQNKTDLVQDVEISVEPSDAFMFSGLKQIRLRILPGTEQEMLYNFYPLMAGYQQLPSLNINLLRFPNFTNQLLRRFIPTSIFVKPQGRLMDDTSIAAA.

N6-acetyllysine is present on lysine 245.

The protein belongs to the TRAPPC11 family. Component of the multisubunit TRAPP (transport protein particle) complex, which includes at least TRAPPC2, TRAPPC2L, TRAPPC3, TRAPPC3L, TRAPPC4, TRAPPC5, TRAPPC8, TRAPPC9, TRAPPC10, TRAPPC11 and TRAPPC12.

It is found in the golgi apparatus. It localises to the cis-Golgi network. Its function is as follows. Involved in endoplasmic reticulum to Golgi apparatus trafficking at a very early stage. The polypeptide is Trafficking protein particle complex subunit 11 (TRAPPC11) (Homo sapiens (Human)).